Consider the following 427-residue polypeptide: MSTNAELFDRACRSIPGGVNSPVRAFRSVGGTPRFIQRAQGPYVWDAEGKQYIDYVGSWGPAILGHAHPEVVRAVQEAAVHGLSFGAPTEAEVELAEMLIARLPSLEQVRLVSSGTEATMTAIRLARGATGRHKIIKFEGCYHGHSDSLLVKAGSGLLTFGNPSSAGVPPEFVAHTLTLEFNNLAVVDAAFSQHGAEIACVIVEPVAGNMNLIKPAEGFLAGLRELCTRHGAVLIFDEVMTGFRIGPQGVQGLTGVRPDLTTLAKVIGGGMPVGAFGGRADLMTHIAPLGGVYQAGTLSGNPVAVAAGLATMRLIGEPGFYERLSAQTARLAQGLQERARAAGVPFSADAIGGMFGLYFGDRVPASFAEVSACDTEAFKRFFHAMLERGIHFAPSAFEAGFVSATHDDAVIDATLEAAEQVFATLRA.

Lys-265 carries the post-translational modification N6-(pyridoxal phosphate)lysine.

The protein belongs to the class-III pyridoxal-phosphate-dependent aminotransferase family. HemL subfamily. As to quaternary structure, homodimer. Requires pyridoxal 5'-phosphate as cofactor.

It is found in the cytoplasm. It catalyses the reaction (S)-4-amino-5-oxopentanoate = 5-aminolevulinate. It functions in the pathway porphyrin-containing compound metabolism; protoporphyrin-IX biosynthesis; 5-aminolevulinate from L-glutamyl-tRNA(Glu): step 2/2. The protein is Glutamate-1-semialdehyde 2,1-aminomutase of Bordetella pertussis (strain Tohama I / ATCC BAA-589 / NCTC 13251).